The chain runs to 490 residues: Glutamyl-tRNA(Gln) amidotransferase subunit A (490 aa).

Catalysis depends on charge relay system residues lysine 79 and serine 154. Serine 178 (acyl-ester intermediate) is an active-site residue.

Belongs to the amidase family. GatA subfamily. Heterotrimer of A, B and C subunits.

The catalysed reaction is L-glutamyl-tRNA(Gln) + L-glutamine + ATP + H2O = L-glutaminyl-tRNA(Gln) + L-glutamate + ADP + phosphate + H(+). Its function is as follows. Allows the formation of correctly charged Gln-tRNA(Gln) through the transamidation of misacylated Glu-tRNA(Gln) in organisms which lack glutaminyl-tRNA synthetase. The reaction takes place in the presence of glutamine and ATP through an activated gamma-phospho-Glu-tRNA(Gln). The chain is Glutamyl-tRNA(Gln) amidotransferase subunit A from Roseiflexus castenholzii (strain DSM 13941 / HLO8).